The primary structure comprises 157 residues: Ribonuclease H (157 aa).

In terms of domain architecture, RNase H type-1 spans 2–145; the sequence is NAEISKIYTD…CDAIARAFAA (144 aa). Residues D11, E50, D74, and D137 each contribute to the Mg(2+) site.

It belongs to the RNase H family. Monomer. The cofactor is Mg(2+).

The protein localises to the cytoplasm. The enzyme catalyses Endonucleolytic cleavage to 5'-phosphomonoester.. Endonuclease that specifically degrades the RNA of RNA-DNA hybrids. This Cyanothece sp. (strain PCC 7425 / ATCC 29141) protein is Ribonuclease H.